A 752-amino-acid polypeptide reads, in one-letter code: Peptidyl-prolyl cis-trans isomerase G (752 aa).

One can recognise a PPIase cyclophilin-type domain in the interval 11 to 176 (FFDIAINNQP…AEVRILSCGE (166 aa)). Residues 182-193 (KVKKEEKKRHKS) show a composition bias toward basic residues. A disordered region spans residues 182-752 (KVKKEEKKRH…SPGTDEDKSG (571 aa)). Low complexity predominate over residues 194–214 (SSSSSSSDSDSSSDSQSSSES). Residues 226–251 (RKRKKKHRKNSRKHKKEKKKRKKSKK) are compositionally biased toward basic residues. Phosphoserine is present on residues S252, S254, S255, S257, and S288. The segment covering 290–308 (PKADDKERKNREREREREC) has biased composition (basic and acidic residues). Phosphoserine is present on S313. Basic residues predominate over residues 327–345 (SGRKIKGRGPRRYRTPSRS). Basic and acidic residues-rich tracts occupy residues 346-366 (RSRDRFRRSETPPHWRQEMQR) and 377-447 (RWIK…DKYN). S354 is subject to Phosphoserine. At T356 the chain carries Phosphothreonine. S384 carries the post-translational modification Phosphoserine. K390 participates in a covalent cross-link: Glycyl lysine isopeptide (Lys-Gly) (interchain with G-Cter in SUMO2). Residues S395, S411, and S413 each carry the phosphoserine modification. A compositionally biased stretch (basic residues) spans 448–461 (KNKVKKRGKSKSRS). Composition is skewed to basic and acidic residues over residues 462-552 (KSKE…DLTK) and 577-598 (RSHDRDRSRSKEYHRYREQEYR). Over residues 599-625 (RRGRSRSRDRRTPGRSRSKDRRRRRRD) the composition is skewed to basic residues. The segment covering 626 to 684 (SRSSEREESQSRNKDKYRSQESKSSHRKENSEGEKRTYSKSRDHNSSSNNREKKADREQ) has biased composition (basic and acidic residues). Phosphoserine is present on residues S685 and S688. A compositionally biased stretch (polar residues) spans 685–705 (SPVSKTKQSSQDNEVKSSTLK). Residue K691 forms a Glycyl lysine isopeptide (Lys-Gly) (interchain with G-Cter in SUMO2) linkage. 3 positions are modified to phosphoserine: S694, S742, and S743. The segment covering 706–752 (NQEDEKTRSPVEKENQKSKGQENDHVHDKNKKCDHESSPGTDEDKSG) has biased composition (basic and acidic residues). The residue at position 746 (T746) is a Phosphothreonine. S751 is subject to Phosphoserine.

As to quaternary structure, interacts with CLK1, PNN and with the phosphorylated C-terminal domain of RNA polymerase II.

It is found in the nucleus matrix. The protein localises to the nucleus speckle. It carries out the reaction [protein]-peptidylproline (omega=180) = [protein]-peptidylproline (omega=0). Inhibited by cyclosporin A (CsA). In terms of biological role, PPIase that catalyzes the cis-trans isomerization of proline imidic peptide bonds in oligopeptides and may therefore assist protein folding. May be implicated in the folding, transport, and assembly of proteins. May play an important role in the regulation of pre-mRNA splicing. The chain is Peptidyl-prolyl cis-trans isomerase G (Ppig) from Mus musculus (Mouse).